Consider the following 245-residue polypeptide: Probable phosphatase PMI1003 (245 aa).

Zn(2+) contacts are provided by histidine 7, histidine 9, histidine 15, histidine 40, glutamate 73, histidine 101, histidine 131, aspartate 192, and histidine 194.

The protein belongs to the PHP family. In terms of assembly, homotrimer. It depends on Zn(2+) as a cofactor.

The chain is Probable phosphatase PMI1003 from Proteus mirabilis (strain HI4320).